The following is a 116-amino-acid chain: Protein Rev (116 aa).

Residues Ser-5 and Ser-8 each carry the phosphoserine; by host CK2 modification. A homomultimerization region spans residues 18-26; sequence LIKFLYQSN. The segment at 23–48 is disordered; it reads YQSNPPPKPEGTRQARRNRRRRWRER. The short motif at 34-50 is the Nuclear localization signal and RNA-binding (RRE) element; that stretch reads TRQARRNRRRRWRERQR. Positions 36 to 47 are enriched in basic residues; that stretch reads QARRNRRRRWRE. The short motif at 73–84 is the Nuclear export signal and binding to XPO1 element; that stretch reads LQLPPLERLTLD. Phosphoserine; by host is present on residues Ser-92 and Ser-99. Positions 92–116 are disordered; it reads SGTQGVGSPQILVESPTVLESGTKE.

The protein belongs to the HIV-1 REV protein family. In terms of assembly, homomultimer; when bound to the RRE. Multimeric assembly is essential for activity and may involve XPO1. Binds to human KPNB1, XPO1, TNPO1, RANBP5 and IPO7. Interacts with the viral Integrase. Interacts with human KHDRBS1. Interacts with human NAP1; this interaction decreases Rev multimerization and stimulates its activity. Interacts with human DEAD-box helicases DDX3 and DDX24; these interactions may serve for viral RNA export to the cytoplasm and packaging, respectively. Interacts with human PSIP1; this interaction may inhibit HIV-1 DNA integration by promoting dissociation of the Integrase-LEDGF/p75 complex. In terms of processing, asymmetrically arginine dimethylated at one site by host PRMT6. Methylation impairs the RNA-binding activity and export of viral RNA from the nucleus to the cytoplasm. Phosphorylated by protein kinase CK2. Presence of, and maybe binding to the N-terminus of the regulatory beta subunit of CK2 is necessary for CK2-mediated Rev's phosphorylation.

It localises to the host nucleus. The protein localises to the host nucleolus. The protein resides in the host cytoplasm. Escorts unspliced or incompletely spliced viral pre-mRNAs (late transcripts) out of the nucleus of infected cells. These pre-mRNAs carry a recognition sequence called Rev responsive element (RRE) located in the env gene, that is not present in fully spliced viral mRNAs (early transcripts). This function is essential since most viral proteins are translated from unspliced or partially spliced pre-mRNAs which cannot exit the nucleus by the pathway used by fully processed cellular mRNAs. Rev itself is translated from a fully spliced mRNA that readily exits the nucleus. Rev's nuclear localization signal (NLS) binds directly to KPNB1/Importin beta-1 without previous binding to KPNA1/Importin alpha-1. KPNB1 binds to the GDP bound form of RAN (Ran-GDP) and targets Rev to the nucleus. In the nucleus, the conversion from Ran-GDP to Ran-GTP dissociates Rev from KPNB1 and allows Rev's binding to the RRE in viral pre-mRNAs. Rev multimerization on the RRE via cooperative assembly exposes its nuclear export signal (NES) to the surface. Rev can then form a complex with XPO1/CRM1 and Ran-GTP, leading to nuclear export of the complex. Conversion from Ran-GTP to Ran-GDP mediates dissociation of the Rev/RRE/XPO1/RAN complex, so that Rev can return to the nucleus for a subsequent round of export. Beside KPNB1, also seems to interact with TNPO1/Transportin-1, RANBP5/IPO5 and IPO7/RANBP7 for nuclear import. The nucleoporin-like HRB/RIP is an essential cofactor that probably indirectly interacts with Rev to release HIV RNAs from the perinuclear region to the cytoplasm. This Human immunodeficiency virus type 1 group M subtype B (isolate SC) (HIV-1) protein is Protein Rev.